Reading from the N-terminus, the 618-residue chain is Mitochondrial Rho GTPase 2 (618 aa).

Topologically, residues 1-591 (MKRDVRILLL…LNAVELGAAS (591 aa)) are cytoplasmic. Residues 2 to 168 (KRDVRILLLG…FYYAQKAVLH (167 aa)) form the Miro 1 domain. The GTP site is built by Gly-16, Lys-17, Thr-18, and Ser-19. Thr-18 lines the Mg(2+) pocket. Mg(2+) contacts are provided by Pro-35 and Asp-57. Residues Ser-59, Asn-118, Lys-119, Asp-121, Ala-149, and Lys-150 each coordinate GTP. 2 EF-hand domains span residues 184–219 (ACSR…CFGN) and 304–339 (LGYQ…FPCM). Positions 197, 199, 201, 208, 317, 319, 321, and 328 each coordinate Ca(2+). In terms of domain architecture, Miro 2 spans 416-579 (RNVFLCKVLG…YTKLATAATF (164 aa)). Positions 428, 430, 431, 432, and 433 each coordinate GTP. Ser-432 lines the Mg(2+) pocket. Glu-474 lines the Mg(2+) pocket. GTP contacts are provided by Lys-528, Asp-530, and Cys-559. Residues 592–614 (FWLRVALGAAVTALVGFTLYRVL) traverse the membrane as a helical; Anchor for type IV membrane protein segment. Residues 615-618 (AKNK) lie on the Mitochondrial intermembrane side of the membrane.

It belongs to the mitochondrial Rho GTPase family. In terms of assembly, homodimer.

The protein localises to the mitochondrion outer membrane. It carries out the reaction GTP + H2O = GDP + phosphate + H(+). It catalyses the reaction ATP + H2O = ADP + phosphate + H(+). The catalysed reaction is UTP + H2O = UDP + phosphate + H(+). Functionally, atypical mitochondrial nucleoside-triphosphatase (NTPase) involved in mitochondrial trafficking. Probably involved in control of anterograde transport of mitochondria and their subcellular distribution. Can hydrolyze GTP, ATP and UTP. This chain is Mitochondrial Rho GTPase 2 (RHOT2), found in Gallus gallus (Chicken).